The following is a 448-amino-acid chain: Probable rhamnogalacturonase E (448 aa).

The first 22 residues, 1 to 22 (MTWSTSFLVATSLLSIINSVHA), serve as a signal peptide directing secretion. A disulfide bond links C43 and C69. N-linked (GlcNAc...) asparagine glycans are attached at residues N54, N92, and N131. Catalysis depends on D221, which acts as the Proton donor. Residues C223 and C240 are joined by a disulfide bond. N-linked (GlcNAc...) asparagine glycosylation is found at N256 and N284. Residue H296 is part of the active site. N-linked (GlcNAc...) asparagine glycosylation is found at N323 and N328. Disulfide bonds link C346-C352 and C374-C382.

Belongs to the glycosyl hydrolase 28 family.

It is found in the secreted. Pectinolytic enzymes consist of four classes of enzymes: pectine lyase, polygalacturonase, pectin methylesterase and rhamnogalacturonase. Hydrolyzes alpha-D-galacturonopyranosyl-(1,2)-alpha-L-rhamnopyranosyl linkages in the backbone of the hairy regions of pectins. The chain is Probable rhamnogalacturonase E (rhgE) from Aspergillus niger (strain ATCC MYA-4892 / CBS 513.88 / FGSC A1513).